Consider the following 522-residue polypeptide: Glutathione reductase, mitochondrial (522 aa).

The N-terminal 43 residues, 1–43 (MALLPRALSAGAGPSWRRAARAFRGFLLLLPEPAALTRALSRA), are a transit peptide targeting the mitochondrion. FAD is bound by residues serine 74 and glycine 75. A glutathione-binding site is contributed by serine 74. Position 81 (arginine 81) interacts with glutathione. Glutamate 94 lines the FAD pocket. An N6-acetyllysine modification is found at lysine 97. FAD contacts are provided by threonine 101, cysteine 102, and lysine 110. Cysteine 102 and cysteine 107 are oxidised to a cystine. Tyrosine 158 is a glutathione binding site. Residue alanine 174 coordinates FAD. Residues alanine 239, isoleucine 242, glutamate 245, arginine 262, arginine 268, and glycine 334 each coordinate NADP(+). Aspartate 375 provides a ligand contact to FAD. Leucine 381 is a binding site for NADP(+). Threonine 383 contributes to the FAD binding site. A glutathione-binding site is contributed by arginine 391. Residue valine 414 coordinates NADP(+). Histidine 511 is a binding site for FAD. Histidine 511 acts as the Proton acceptor in catalysis.

This sequence belongs to the class-I pyridine nucleotide-disulfide oxidoreductase family. In terms of assembly, homodimer; disulfide-linked. FAD serves as cofactor.

It localises to the mitochondrion. The protein resides in the cytoplasm. It carries out the reaction 2 glutathione + NADP(+) = glutathione disulfide + NADPH + H(+). Functionally, catalyzes the reduction of glutathione disulfide (GSSG) to reduced glutathione (GSH). Constitutes the major mechanism to maintain a high GSH:GSSG ratio in the cytosol. The protein is Glutathione reductase, mitochondrial (GSR) of Homo sapiens (Human).